A 202-amino-acid polypeptide reads, in one-letter code: MDYFPMIFALLFVAFQGAPEAAVLGTELSAGAEDGGEKPAPATPWRPRRSKRCSCSSLMDKECVYFCHLDIIWVNTPEHVVPYGLGSPSRSKRSLKDFFPTKATVHRKRCQCASQTDKKCWNFCQAGKELRDQDSMEKAWNNQKRGKDCSKLGEKCLHQQLVAGRKTRRLEAISNSIKTSFRVAKLKAQLYRDKKVIYNRAH.

The signal sequence occupies residues 1-25; sequence MDYFPMIFALLFVAFQGAPEAAVLG. The propeptide occupies 26-50; sequence TELSAGAEDGGEKPAPATPWRPRRS. 2 disulfides stabilise this stretch: Cys53–Cys67 and Cys55–Cys63. A propeptide spanning residues 74-202 is cleaved from the precursor; that stretch reads VNTPEHVVPY…DKKVIYNRAH (129 aa). The interval 110–124 is endothelin-like; sequence CQCASQTDKKCWNFC.

Belongs to the endothelin/sarafotoxin family.

Its subcellular location is the secreted. Its function is as follows. Endothelins are endothelium-derived vasoconstrictor peptides. Probable ligand for G-protein coupled receptors EDNRA and EDNRB which activates PTK2B, BCAR1, BCAR3 and, GTPases RAP1 and RHOA cascade in glomerular mesangial cells. Also binds the DEAR/FBXW7-AS1 receptor. Promotes mesenteric arterial wall remodeling via activation of ROCK signaling and subsequent colocalization of NFATC3 with F-actin filaments. NFATC3 then translocates to the nucleus where it subsequently promotes the transcription of the smooth muscle hypertrophy and differentiation marker ACTA2. In Bos taurus (Bovine), this protein is Endothelin-1 (EDN1).